Consider the following 177-residue polypeptide: Large ribosomal subunit protein uL6 (177 aa).

The protein belongs to the universal ribosomal protein uL6 family. Part of the 50S ribosomal subunit.

This protein binds to the 23S rRNA, and is important in its secondary structure. It is located near the subunit interface in the base of the L7/L12 stalk, and near the tRNA binding site of the peptidyltransferase center. In Buchnera aphidicola subsp. Acyrthosiphon kondoi (Acyrthosiphon kondoi symbiotic bacterium), this protein is Large ribosomal subunit protein uL6.